The following is a 66-amino-acid chain: Large ribosomal subunit protein bL33c (66 aa).

It belongs to the bacterial ribosomal protein bL33 family.

Its subcellular location is the plastid. It is found in the chloroplast. The sequence is that of Large ribosomal subunit protein bL33c from Saccharum officinarum (Sugarcane).